Reading from the N-terminus, the 439-residue chain is MSQDLIETTATTTKIVEARELGHQIHDSLLEQLKLQQEELLQQQRDLFFQEQQLQLQQQVTQPVSNNGNTWSFTQGLVIGQVSVIFIIIVFVKFFVFADSSSHIPTKPGLDGATGVIVKRNKNKKHSNGQFANDGENEDDTSLDSNQSKISSILEKTYYDVNNHASESLDWFNVLVAQTISQLRSEALLKDNIYHSLNNFLTNAKLPDFIDTINLTEIDIGDDFPIFSNCRIKYGEDLKRLEAKIDVDLSDTLTLGIATKLLLNQPRPLTAVLPVSLTVSIVRFSGCLTVSLINTKDIDLKNVDKTSNMNGYSKENANGDGASSSNNDEDEDDGGTALMFSFSPDYRLEFIVKSLIGSRAKLQDVPKISSLIENQLRTWFIERCVEPRFQVVRLPSLWPRTKNTREPVTKKTTTTPSTTVNGTSAATITTPGEYVNSNI.

Residues 1–76 lie on the Lumenal side of the membrane; it reads MSQDLIETTA…NGNTWSFTQG (76 aa). A helical membrane pass occupies residues 77 to 97; the sequence is LVIGQVSVIFIIIVFVKFFVF. At 98–439 the chain is on the cytoplasmic side; the sequence is ADSSSHIPTK…TPGEYVNSNI (342 aa). Disordered regions lie at residues 125–145, 309–336, and 405–425; these read KHSNGQFANDGENEDDTSLDS, MNGYSKENANGDGASSSNNDEDEDDGGT, and REPVTKKTTTTPSTTVNGTSA. Residues 165-395 form the SMP-LTD domain; the sequence is ASESLDWFNV…EPRFQVVRLP (231 aa). Low complexity-rich tracts occupy residues 315 to 326 and 410 to 424; these read ENANGDGASSSN and KKTTTTPSTTVNGTS.

This sequence belongs to the MMM1 family. Homodimer. Component of the ER-mitochondria encounter structure (ERMES) or MDM complex, composed of MMM1, MDM10, MDM12 and MDM34. An MMM1 homodimer associates with one molecule of MDM12 on each side in a pairwise head-to-tail manner, and the SMP-LTD domains of MMM1 and MDM12 generate a continuous hydrophobic tunnel for phospholipid trafficking.

It is found in the endoplasmic reticulum membrane. In terms of biological role, component of the ERMES/MDM complex, which serves as a molecular tether to connect the endoplasmic reticulum (ER) and mitochondria. Components of this complex are involved in the control of mitochondrial shape and protein biogenesis, and function in nonvesicular lipid trafficking between the ER and mitochondria. The MDM12-MMM1 subcomplex functions in the major beta-barrel assembly pathway that is responsible for biogenesis of all outer membrane beta-barrel proteins, and acts in a late step after the SAM complex. The MDM10-MDM12-MMM1 subcomplex further acts in the TOM40-specific pathway after the action of the MDM12-MMM1 complex. Essential for establishing and maintaining the structure of mitochondria and maintenance of mtDNA nucleoids. The chain is Maintenance of mitochondrial morphology protein 1 from Candida albicans (strain SC5314 / ATCC MYA-2876) (Yeast).